The primary structure comprises 415 residues: Putative serpin-Z6C (415 aa).

The interval 357 to 381 (GTEAAAATAVCLTFASAAPSSRRPA) is RCL.

This sequence belongs to the serpin family.

Probable serine protease inhibitor. The chain is Putative serpin-Z6C from Oryza sativa subsp. japonica (Rice).